A 126-amino-acid polypeptide reads, in one-letter code: Large ribosomal subunit protein bL17 (126 aa).

The protein belongs to the bacterial ribosomal protein bL17 family. In terms of assembly, part of the 50S ribosomal subunit. Contacts protein L32.

This Xylella fastidiosa (strain Temecula1 / ATCC 700964) protein is Large ribosomal subunit protein bL17.